The chain runs to 207 residues: dITP/XTP pyrophosphatase (207 aa).

11 to 16 (TGNPGK) contacts substrate. The active-site Proton acceptor is aspartate 72. Mg(2+) is bound at residue aspartate 72. Residues serine 73, 154–157 (FGYD), lysine 177, and 182–183 (HR) contribute to the substrate site.

Belongs to the HAM1 NTPase family. As to quaternary structure, homodimer. It depends on Mg(2+) as a cofactor.

The catalysed reaction is XTP + H2O = XMP + diphosphate + H(+). It catalyses the reaction dITP + H2O = dIMP + diphosphate + H(+). The enzyme catalyses ITP + H2O = IMP + diphosphate + H(+). Functionally, pyrophosphatase that catalyzes the hydrolysis of nucleoside triphosphates to their monophosphate derivatives, with a high preference for the non-canonical purine nucleotides XTP (xanthosine triphosphate), dITP (deoxyinosine triphosphate) and ITP. Seems to function as a house-cleaning enzyme that removes non-canonical purine nucleotides from the nucleotide pool, thus preventing their incorporation into DNA/RNA and avoiding chromosomal lesions. This Thermus thermophilus (strain ATCC 27634 / DSM 579 / HB8) protein is dITP/XTP pyrophosphatase.